We begin with the raw amino-acid sequence, 37 residues long: Alpha-conotoxin TxID (37 aa).

A propeptide spanning residues 1–21 (FDGRNAAGNDKMSALMALTTR) is cleaved from the precursor. 2 cysteine pairs are disulfide-bonded: Cys-23–Cys-29 and Cys-24–Cys-36. Cysteine amide is present on Cys-36.

It belongs to the conotoxin A superfamily. In terms of processing, unmodified Met-32 is essential for toxin binding to rat alpha-3-beta-4/CHRNA3-CHRNB4 nAChR. An oxidation of this methionine provokes a 13.3-fold decrease in inhibitory potency (IC(50)=245 nM instead of 18 nM). Owing to its potent activity, derivatives of this toxin have a potential in the development of a novel drug. Unfortunately, the oxidation of the methionine is readily to happen during toxin synthesis and oxidation steps as well as under oxidative environment in vivo, which should still be considered to find a solution to this major drawback. As to expression, expressed by the venom duct.

It is found in the secreted. In terms of biological role, alpha-conotoxins act on postsynaptic membranes, they bind to the nicotinic acetylcholine receptors (nAChR) and thus inhibit them. This toxin inhibits alpha-3-beta-4/CHRNA3-CHRNB4 (IC(50)=3.6-18.38 nM), alpha-6/alpha-3-beta-4 (CHRNA6/CHRNA3-CHRNB4) (IC(50)=33.9-94.1 nM), and alpha-2-beta-4/CHRNA2-CHRNB4 (IC(50)=4550 nM) nAChRs. The toxin competes with agonists in the orthosteric binding site of alpha-3-beta-4/CHRNA3-CHRNB4 and alpha-6-beta-4/CHRNA6-CHRNB4. The protein is Alpha-conotoxin TxID of Conus textile (Cloth-of-gold cone).